The chain runs to 342 residues: Putative anthocyanidin reductase (342 aa).

Residues R44, K51, 71-72, 91-93, Y172, K176, 199-202, and S214 contribute to the NADP(+) site; these read EL, VAT, and PVLV. Residue K176 is the Proton donor of the active site.

Belongs to the NAD(P)-dependent epimerase/dehydratase family. Dihydroflavonol-4-reductase subfamily. As to expression, highly expressed in leaves and weakly in stems. Not expressed in roots.

It functions in the pathway secondary metabolite biosynthesis; flavonoid biosynthesis. In Ginkgo biloba (Ginkgo), this protein is Putative anthocyanidin reductase.